The following is a 740-amino-acid chain: MDPKAYSEAVAALVGARHSNPFAFLGPHEGRAEGGRGGFCIRCFRPKATAVSLISAADDTVLGRMKRLHPDGLFGIDLPEAPGALAYRLRVSEGDEDRDIEDPYRFGPVLGELDRHLLGEGTHLDIYRKMGAHPMTRDGVRGTGFALWAPNATRVSVIGDFNGWDGRLHPMRAHPGSGVWDIFLPGVVEGHLYKYELLGPDGSLLPAKADPYAFQAEKPPHTASVVRGLGTYAWNDGRWMSERADRVATSAPVSIYEVHLGSWRHGGGDRSLSYREMAEQLIPYVKEMGFTHIELLPVSEFPFDGSWGYQPIGLFAPTSRFGEPDDFRHFVDRCHQEGVGVILDWVAGHFPEDAHGLSWFDGTHLYEHSDPRQGRHMDWGTYIFNYGRNEVRNFLLANALFWLEQFHIDGLRVDAVASMLYLDYSRKAGEWVPNKFGGRENLEAIDFLRRMNELVYGRFPGAVTIAEESTAWPMVSRPVHLGGLGFGYKWNMGWMNDTLSYMSQDPIYRRFHQHDLSFGLLYAFTENFVLPLSHDEVVHGKRSILGRMPGDAWQQFANLRAYYGFMWTHPGKKLLFMGCEFAQGREWNHNASLDWHLLDIDWHKGVQALVRDLNGLYAGVPALHDRDTEGYGFSWIDCTDADQSVLAFLRFGETAEDVVMVVCNFTPNPRHGYRLGAPIAGRWREIFNTDSAHYGGSNMGNSVVETEETKSHGHAQSVVLTLPPLATIVLRPDGPITRIA.

Aspartate 414 serves as the catalytic Nucleophile. The Proton donor role is filled by glutamate 467.

It belongs to the glycosyl hydrolase 13 family. GlgB subfamily. As to quaternary structure, monomer.

The enzyme catalyses Transfers a segment of a (1-&gt;4)-alpha-D-glucan chain to a primary hydroxy group in a similar glucan chain.. Its pathway is glycan biosynthesis; glycogen biosynthesis. Catalyzes the formation of the alpha-1,6-glucosidic linkages in glycogen by scission of a 1,4-alpha-linked oligosaccharide from growing alpha-1,4-glucan chains and the subsequent attachment of the oligosaccharide to the alpha-1,6 position. This Rhodospirillum rubrum (strain ATCC 11170 / ATH 1.1.1 / DSM 467 / LMG 4362 / NCIMB 8255 / S1) protein is 1,4-alpha-glucan branching enzyme GlgB.